A 264-amino-acid polypeptide reads, in one-letter code: 4-oxalocrotonate decarboxylase (264 aa).

Belongs to the hydratase/decarboxylase family.

It catalyses the reaction (3E)-2-oxohex-3-enedioate + H(+) = 2-oxopent-4-enoate + CO2. It participates in aromatic compound metabolism; benzoate degradation via hydroxylation. The sequence is that of 4-oxalocrotonate decarboxylase (dmpH) from Pseudomonas sp. (strain CF600).